The primary structure comprises 440 residues: Glutamate--tRNA ligase 2 (440 aa).

Residues 8–18 carry the 'HIGH' region motif; that stretch reads PSPTGYLHVGN. Residues 239-243 carry the 'KMSKS' region motif; it reads ALSKR. Lys242 contributes to the ATP binding site.

This sequence belongs to the class-I aminoacyl-tRNA synthetase family. Glutamate--tRNA ligase type 1 subfamily. Monomer.

Its subcellular location is the cytoplasm. The catalysed reaction is tRNA(Glu) + L-glutamate + ATP = L-glutamyl-tRNA(Glu) + AMP + diphosphate. In terms of biological role, catalyzes the attachment of glutamate to tRNA(Glu) in a two-step reaction: glutamate is first activated by ATP to form Glu-AMP and then transferred to the acceptor end of tRNA(Glu). The polypeptide is Glutamate--tRNA ligase 2 (Dinoroseobacter shibae (strain DSM 16493 / NCIMB 14021 / DFL 12)).